The following is a 350-amino-acid chain: Arginine N-succinyltransferase (350 aa).

Leucine 125 lines the succinyl-CoA pocket. Histidine 229 acts as the Proton donor in catalysis.

This sequence belongs to the arginine N-succinyltransferase family.

The enzyme catalyses succinyl-CoA + L-arginine = N(2)-succinyl-L-arginine + CoA + H(+). It functions in the pathway amino-acid degradation; L-arginine degradation via AST pathway; L-glutamate and succinate from L-arginine: step 1/5. Functionally, catalyzes the transfer of succinyl-CoA to arginine to produce N(2)-succinylarginine. The protein is Arginine N-succinyltransferase of Yersinia pseudotuberculosis serotype IB (strain PB1/+).